The primary structure comprises 123 residues: Ribonuclease P protein component (123 aa).

It belongs to the RnpA family. In terms of assembly, consists of a catalytic RNA component (M1 or rnpB) and a protein subunit.

It catalyses the reaction Endonucleolytic cleavage of RNA, removing 5'-extranucleotides from tRNA precursor.. RNaseP catalyzes the removal of the 5'-leader sequence from pre-tRNA to produce the mature 5'-terminus. It can also cleave other RNA substrates such as 4.5S RNA. The protein component plays an auxiliary but essential role in vivo by binding to the 5'-leader sequence and broadening the substrate specificity of the ribozyme. This chain is Ribonuclease P protein component, found in Streptomyces griseus subsp. griseus (strain JCM 4626 / CBS 651.72 / NBRC 13350 / KCC S-0626 / ISP 5235).